Reading from the N-terminus, the 123-residue chain is Protein LLP homolog (123 aa).

Residues 1-21 (MAKSLRSKWKRKMRAEKRKKN) show a composition bias toward basic residues. 2 disordered regions span residues 1 to 22 (MAKS…KKNA) and 61 to 123 (DLDV…KLAW). The segment covering 70–89 (ESSKMDTELKRNKKNLRDQH) has biased composition (basic and acidic residues). Basic residues predominate over residues 100-123 (QQKKLKSQCGKKKGKSKQAKKLAW).

The protein belongs to the learning-associated protein family.

It is found in the nucleus. The protein localises to the nucleolus. The protein resides in the chromosome. Its function is as follows. Regulates dendritic and spine growth and synaptic transmission. This Xenopus laevis (African clawed frog) protein is Protein LLP homolog (llph).